Here is a 730-residue protein sequence, read N- to C-terminus: Elongation factor 2 (730 aa).

The region spanning 19 to 228 (TKIRNIGIVA…TGVSFKDVYD (210 aa)) is the tr-type G domain. GTP is bound by residues 28–35 (AHIDHGKT), 94–98 (DTPGH), and 148–151 (NKVD). At H596 the chain carries Diphthamide.

The protein belongs to the TRAFAC class translation factor GTPase superfamily. Classic translation factor GTPase family. EF-G/EF-2 subfamily.

It localises to the cytoplasm. In terms of biological role, catalyzes the GTP-dependent ribosomal translocation step during translation elongation. During this step, the ribosome changes from the pre-translocational (PRE) to the post-translocational (POST) state as the newly formed A-site-bound peptidyl-tRNA and P-site-bound deacylated tRNA move to the P and E sites, respectively. Catalyzes the coordinated movement of the two tRNA molecules, the mRNA and conformational changes in the ribosome. This is Elongation factor 2 from Methanosarcina barkeri (strain Fusaro / DSM 804).